Here is a 642-residue protein sequence, read N- to C-terminus: Medium-chain-fatty-acid--[acyl-carrier-protein] ligase TtuA (642 aa).

Belongs to the ATP-dependent AMP-binding enzyme family.

It carries out the reaction a medium-chain fatty acid + holo-[ACP] + ATP = a medium-chain fatty acyl-[ACP] + AMP + diphosphate. The enzyme catalyses a medium-chain fatty acid + ATP + H(+) = a medium-chain fatty acyl-AMP + diphosphate. The catalysed reaction is a medium-chain fatty acyl-AMP + holo-[ACP] = a medium-chain fatty acyl-[ACP] + AMP + H(+). It catalyses the reaction decanoate + holo-[ACP] + ATP = decanoyl-[ACP] + AMP + diphosphate. It carries out the reaction decanoate + ATP + H(+) = decanoyl-AMP + diphosphate. The enzyme catalyses decanoyl-AMP + holo-[ACP] = decanoyl-[ACP] + AMP + H(+). Ligase likely involved in the biosynthesis of a polyyne metabolite. Catalyzes the activation of decanoic acid, followed by the loading of the activated decanoic acid onto the acyl carrier protein TtuC. Decanoic acid is the preferred substrate, but it can also use 10-undecenoic acid and lauric acid. Nonanoic acid and 7-octenoic acid are only weakly activated. The polypeptide is Medium-chain-fatty-acid--[acyl-carrier-protein] ligase TtuA (Teredinibacter turnerae (strain ATCC 39867 / T7901)).